Here is a 201-residue protein sequence, read N- to C-terminus: Recombination protein RecR (201 aa).

The C4-type zinc-finger motif lies at 57-72 (CADCRTFTEQEVCNIC). The Toprim domain maps to 81–176 (GQICVVESPA…EASRIAHGVP (96 aa)).

The protein belongs to the RecR family.

May play a role in DNA repair. It seems to be involved in an RecBC-independent recombinational process of DNA repair. It may act with RecF and RecO. This is Recombination protein RecR from Escherichia coli O17:K52:H18 (strain UMN026 / ExPEC).